The sequence spans 257 residues: MAAAHRVSHEPAYVLHRYDWSESSLILEVFTRHHGRIALVAKGAKRPSSNFRPVLLPLQPLQLNYGGDAEIRTLKGAEWMGGHVMPTGEALLSGYYVNELLLRLLARDDAHEALFDAYAGVVQVLAGDHAGAQAATQAAALRAFELLLLREVGLLPSLDVQTLTLEPLVADARYTLVPEAGLRLAAEGEAALSGADWQSLQGVLDDRAPFTATLREIATMNAGSNSALRNQLRALLNYHCGVSTLRTRQMMRDLQAL.

This sequence belongs to the RecO family.

Involved in DNA repair and RecF pathway recombination. The chain is DNA repair protein RecO from Variovorax paradoxus (strain S110).